Reading from the N-terminus, the 465-residue chain is Methionine aminopeptidase 2-2 (465 aa).

Residues 1–11 (MGSKTPHNHRR) show a composition bias toward basic residues. Residues 1-89 (MGSKTPHNHR…KKKKNTKELE (89 aa)) form a disordered region. Over residues 43–54 (GESEGGEDEDDD) the composition is skewed to acidic residues. Basic residues predominate over residues 73–84 (RNKRKKKKKKKN). H217 lines the substrate pocket. A divalent metal cation is bound by residues D238, D249, and H318. Residue H326 participates in substrate binding. Residues E351 and E446 each coordinate a divalent metal cation.

Belongs to the peptidase M24A family. Methionine aminopeptidase eukaryotic type 2 subfamily. The cofactor is Co(2+). It depends on Zn(2+) as a cofactor. Mn(2+) is required as a cofactor. Requires Fe(2+) as cofactor.

The protein resides in the cytoplasm. It catalyses the reaction Release of N-terminal amino acids, preferentially methionine, from peptides and arylamides.. In terms of biological role, cotranslationally removes the N-terminal methionine from nascent proteins. The N-terminal methionine is often cleaved when the second residue in the primary sequence is small and uncharged (Met-Ala-, Cys, Gly, Pro, Ser, Thr, or Val). The protein is Methionine aminopeptidase 2-2 of Ajellomyces capsulatus (strain G186AR / H82 / ATCC MYA-2454 / RMSCC 2432) (Darling's disease fungus).